The primary structure comprises 103 residues: Small ribosomal subunit protein uS10 (103 aa).

It belongs to the universal ribosomal protein uS10 family. As to quaternary structure, part of the 30S ribosomal subunit.

Functionally, involved in the binding of tRNA to the ribosomes. This is Small ribosomal subunit protein uS10 from Dechloromonas aromatica (strain RCB).